We begin with the raw amino-acid sequence, 553 residues long: uncharacterized protein (553 aa).

Transmembrane regions (helical) follow at residues 13-30 (ALQAVVVLSLISAIGLGL), 37-59 (GISLGVTFVFFAGILAGHFGLSI), 69-91 (SFGLIIFVYALGLQVGPGFFSSF), 98-120 (LNMLAIAVVILGTFLAVVCSYTT), and 157-179 (TPALGCAVAYPLGVIGVILAVLL). RCK C-terminal domains lie at 190–273 (LEVQ…LFGE) and 281–365 (KEDI…VLGN). 6 helical membrane-spanning segments follow: residues 375–397 (LVAVFVGIILGLALGAVPFSIPG), 402–424 (VRLGLAGGPIIVGILIGTFGPRL), 436–458 (LMLRALGLSLYLACLGLDAGAHF), 468–490 (LLWIGLGFGLTLVPTVLVGFFAF), 497–514 (FGSVSGMLCGSMANPMAL), and 529–551 (AYATVYPLSMFLRVIIAQVLLMF).

It belongs to the AAE transporter (TC 2.A.81) family.

It localises to the cell membrane. This is an uncharacterized protein from Bacteroides fragilis (strain YCH46).